We begin with the raw amino-acid sequence, 88 residues long: EKC/KEOPS complex subunit SPAC4H3.13 (88 aa).

Belongs to the CTAG/PCC1 family. As to quaternary structure, component of the EKC/KEOPS complex composed of at least of SPAP27G11.07c/BUD32, cgi121, gon7, pgp2 and SPAC4H3.13/PCC1; the whole complex dimerizes.

It is found in the cytoplasm. The protein localises to the nucleus. The protein resides in the chromosome. Its subcellular location is the telomere. Component of the EKC/KEOPS complex that is required for the formation of a threonylcarbamoyl group on adenosine at position 37 (t(6)A37) in tRNAs that read codons beginning with adenine. The complex is probably involved in the transfer of the threonylcarbamoyl moiety of threonylcarbamoyl-AMP (TC-AMP) to the N6 group of A37. SPAC4H3.13/PCC1 functions as a dimerization module for the complex. The EKC/KEOPS complex also promotes both telomere uncapping and telomere elongation. The complex is required for efficient recruitment of transcriptional coactivators. The protein is EKC/KEOPS complex subunit SPAC4H3.13 of Schizosaccharomyces pombe (strain 972 / ATCC 24843) (Fission yeast).